The following is a 144-amino-acid chain: Fluoride-specific ion channel FluC 1 (144 aa).

A run of 4 helical transmembrane segments spans residues 11-31, 44-64, 74-94, and 107-127; these read LIYI…YYLG, LATL…TTYI, VITG…TFSV, and IAFL…GLGY. Na(+)-binding residues include Gly-84 and Thr-87.

The protein belongs to the fluoride channel Fluc/FEX (TC 1.A.43) family.

Its subcellular location is the cell membrane. It catalyses the reaction fluoride(in) = fluoride(out). Its activity is regulated as follows. Na(+) is not transported, but it plays an essential structural role and its presence is essential for fluoride channel function. Fluoride-specific ion channel. Important for reducing fluoride concentration in the cell, thus reducing its toxicity. The sequence is that of Fluoride-specific ion channel FluC 1 from Bacillus cereus (strain ATCC 14579 / DSM 31 / CCUG 7414 / JCM 2152 / NBRC 15305 / NCIMB 9373 / NCTC 2599 / NRRL B-3711).